The following is a 1032-amino-acid chain: GPI ethanolamine phosphate transferase 1 (1032 aa).

Residues Met1 to Arg6 lie on the Cytoplasmic side of the membrane. Residues Phe7–Ile27 form a helical membrane-spanning segment. The Lumenal portion of the chain corresponds to Tyr28–Arg468. N-linked (GlcNAc...) asparagine glycosylation is found at Asn150 and Asn435. A helical transmembrane segment spans residues Thr469–Leu489. Residues His490–Arg500 are Cytoplasmic-facing. Residues Thr501–Tyr521 traverse the membrane as a helical segment. The Lumenal portion of the chain corresponds to Gln522–Lys523. Residues Ser524 to Ala544 traverse the membrane as a helical segment. Residues Arg545–Gly564 are Cytoplasmic-facing. Residues Gly565–Met585 traverse the membrane as a helical segment. Residues Arg586–Glu596 lie on the Lumenal side of the membrane. Residues Ile597–Val617 traverse the membrane as a helical segment. At Arg618 to Val622 the chain is on the cytoplasmic side. Residues Leu623–Ile643 form a helical membrane-spanning segment. Topologically, residues Lys644–Asn647 are lumenal. A helical transmembrane segment spans residues Ile648 to Phe668. At Glu669 to Ser688 the chain is on the cytoplasmic side. Residues Leu689–Thr709 traverse the membrane as a helical segment. Residues Arg710–Leu722 lie on the Lumenal side of the membrane. The chain crosses the membrane as a helical span at residues Pro723–Phe743. At His744 to Thr766 the chain is on the cytoplasmic side. Residues Phe767 to Val787 form a helical membrane-spanning segment. The Lumenal portion of the chain corresponds to Thr788 to Arg841. N-linked (GlcNAc...) asparagine glycosylation is found at Asn810 and Asn820. A helical membrane pass occupies residues Val842–Ser862. Residues Val863–Ser884 lie on the Cytoplasmic side of the membrane. Residues Ala885–Leu905 form a helical membrane-spanning segment. At Asn906–Ser914 the chain is on the lumenal side. Residues Ala915 to Val935 traverse the membrane as a helical segment. Residues Arg936–Phe951 lie on the Cytoplasmic side of the membrane. The helical transmembrane segment at Leu952–Ile972 threads the bilayer. Topologically, residues Ser973–Val1032 are lumenal. A disordered region spans residues Gly994 to Val1032.

Belongs to the PIGG/PIGN/PIGO family. PIGN subfamily.

The protein resides in the endoplasmic reticulum membrane. The protein operates within glycolipid biosynthesis; glycosylphosphatidylinositol-anchor biosynthesis. Functionally, ethanolamine phosphate transferase involved in glycosylphosphatidylinositol-anchor biosynthesis. Transfers ethanolamine phosphate to the first alpha-1,4-linked mannose of the glycosylphosphatidylinositol precursor of GPI-anchor. The polypeptide is GPI ethanolamine phosphate transferase 1 (mcd4) (Aspergillus fumigatus (strain ATCC MYA-4609 / CBS 101355 / FGSC A1100 / Af293) (Neosartorya fumigata)).